The chain runs to 796 residues: MKHKLDVTINELRLKSIRKIVKRINTWSDEVKSYSDDALKQKTIEFKERLASGVDTLDTLLPEAYAVAREASWRVLGMYPKEVQLIGAIVLHEGNIAEMQTGEGKTLTATMPLYLNALSGKGTYLITTNDYLAKRDFEEMQPLYEWLGLTASLGFVDIVDYEYQKGEKRNIYEHDIIYTTNGRLGFDYLIDNLADSAEGKFLPQLNYGIIDEVDSIILDAAQTPLVISGAPRLQSNLFHIVKEFVDTLIEDVHFKMKKTKKEIWLLNQGIEAAQSYFNVEDLYSEQAMVLVRNINLALRAQYLFESNVDYFVYNGDIVLIDRITGRMLPGTKLQAGLHQAIEAKEGMEVSTDKSVMATITFQNLFKLFESFSGMTATGKLGESEFFDLYSKIVVQVPTDKAIQRIDEPDKVFRSVDEKNIAMIHDIVELHETGRPVLLITRTAEAAEYFSKVLFQMDIPNNLLIAQNVAKEAQMIAEAGQIGSMTVATSMAGRGTDIKLGEGVEALGGLAVIIHEHMENSRVDRQLRGRSGRQGDPGSSCIYISLDDYLVKRWSDSNLAENNQLYSLDAQRLSQSNLFNRKVKQIVVKAQRISEEQGVKAREMANEFEKSISIQRDLVYEERNRVLEIDDAENQDFKALAKDVFEMFVNEEKVLTKSRVVEYIYQNLSFQFNKDVACVNFKDKQAVVTFLLEQFEKQLALNRKNMQSAYYYNIFVQKVFLKAIDSCWLEQVDYLQQLKASVNQRQNGQRNAIFEYHRVALDSFEVMTRNIKKRMVKNICQSMITFDKEGMPVIHFP.

ATP-binding positions include glutamine 84, 102–106, and aspartate 496; that span reads GEGKT.

It belongs to the SecA family. In terms of assembly, monomer and homodimer (Potential). Part of the accessory SecA2/SecY2 protein translocation apparatus required to export cell wall protein SraP.

It is found in the cell membrane. Its subcellular location is the cytoplasm. The catalysed reaction is ATP + H2O + cellular proteinSide 1 = ADP + phosphate + cellular proteinSide 2.. In terms of biological role, part of the accessory SecA2/SecY2 system specifically required to export SraP, a serine-rich repeat cell wall protein encoded upstream in the same operon. This chain is Protein translocase subunit SecA 2, found in Staphylococcus aureus (strain NCTC 8325 / PS 47).